A 784-amino-acid chain; its full sequence is Receptor-like protein 38 (784 aa).

An N-terminal signal peptide occupies residues 1 to 30 (MIRSQSYCFLGITITIYFFFCLLPLPNTFA). At 31 to 752 (SPPTQSLCRH…SELEEPVLNW (722 aa)) the chain is on the extracellular side. LRR repeat units lie at residues 109–133 (LQHL…IENL), 134–157 (SHLT…IGNL), 158–180 (NQLE…SFAN), 182–204 (TKLS…LSNL), and 205–227 (TSLA…DLSG). A glycan (N-linked (GlcNAc...) asparagine) is linked at N132. N-linked (GlcNAc...) asparagine glycosylation is found at N180, N193, and N203. Residues 228 to 251 (LHNLEQIFGNENSFVGLFPASLLK) form an LRR 6; degenerate repeat. LRR repeat units lie at residues 252–276 (ISSL…NTSS), 278–301 (SRLT…LSKL), 302–324 (VNLE…SISK), 326–349 (VNLT…IWKP), 351–373 (NLQS…EVVN), 374–400 (GAKL…NFRF), 402–422 (FFLD…LKNS), 423–446 (TDFN…CMDS), 447–470 (TMLR…LMNC), and 472–496 (DMEF…SRKS). A glycan (N-linked (GlcNAc...) asparagine) is linked at N273. An N-linked (GlcNAc...) asparagine glycan is attached at N327. N421 and N432 each carry an N-linked (GlcNAc...) asparagine glycan. One copy of the LRR 17; degenerate repeat lies at 497-518 (LMVLVLRSNAFYGPVYNSTTYL). N-linked (GlcNAc...) asparagine glycosylation is found at N513, N544, and N562. The stretch at 520–544 (FPRLSIIDISNNDFVGSLPQDYFAN) is one LRR 18 repeat. LRR repeat units follow at residues 608 to 632 (FRGF…IGLL), 633 to 656 (SELL…LANI), 657 to 680 (TNLE…LGNL), and 682 to 705 (FLSN…QFGT). N-linked (GlcNAc...) asparagine glycosylation is found at N639, N655, N668, N679, N687, and N707. The helical transmembrane segment at 753–773 (IAAAIAFGPGVFCGFVIGHIF) threads the bilayer. Over 774 to 784 (TSYKHLWFIAR) the chain is Cytoplasmic.

This sequence belongs to the RLP family.

Its subcellular location is the cell membrane. The protein is Receptor-like protein 38 of Arabidopsis thaliana (Mouse-ear cress).